The primary structure comprises 287 residues: Probable prolyl 4-hydroxylase 3 (287 aa).

At 1–16 the chain is on the cytoplasmic side; the sequence is MAKLRHSRFQARKWST. Residues 17-37 form a helical; Signal-anchor for type II membrane protein membrane-spanning segment; that stretch reads LMLVLFMLFMLTIVLLMLLAF. Residues 38 to 287 lie on the Lumenal side of the membrane; that stretch reads GVFSLPINND…KWMHVGEYKI (250 aa). Residues 159–282 enclose the Fe2OG dioxygenase domain; it reads HGEGLQVLHY…KWSSTKWMHV (124 aa). Residues His-177 and Asp-179 each coordinate Fe cation. Residue Asn-218 is glycosylated (N-linked (GlcNAc...) asparagine). Residue His-263 coordinates Fe cation. 2-oxoglutarate is bound at residue Lys-273.

Belongs to the P4HA family. Fe(2+) serves as cofactor. Requires L-ascorbate as cofactor.

It localises to the endoplasmic reticulum membrane. The catalysed reaction is L-prolyl-[collagen] + 2-oxoglutarate + O2 = trans-4-hydroxy-L-prolyl-[collagen] + succinate + CO2. Functionally, catalyzes the post-translational formation of 4-hydroxyproline in -Xaa-Pro-Gly- sequences in proline-rich peptide sequences of plant glycoproteins and other proteins. Hydroxyprolines are important constituent of many plant cell wall glycoproteins such as extensins, hydroxyproline-rich glycoproteins, lectins and arabinogalactan proteins. The protein is Probable prolyl 4-hydroxylase 3 of Arabidopsis thaliana (Mouse-ear cress).